Reading from the N-terminus, the 599-residue chain is Elongation factor 4 (599 aa).

A tr-type G domain is found at 2–184 (KNIRNFSIIA…RLVRDIPPPE (183 aa)). Residues 14 to 19 (DHGKST) and 131 to 134 (NKID) each bind GTP.

It belongs to the TRAFAC class translation factor GTPase superfamily. Classic translation factor GTPase family. LepA subfamily.

Its subcellular location is the cell inner membrane. The enzyme catalyses GTP + H2O = GDP + phosphate + H(+). Functionally, required for accurate and efficient protein synthesis under certain stress conditions. May act as a fidelity factor of the translation reaction, by catalyzing a one-codon backward translocation of tRNAs on improperly translocated ribosomes. Back-translocation proceeds from a post-translocation (POST) complex to a pre-translocation (PRE) complex, thus giving elongation factor G a second chance to translocate the tRNAs correctly. Binds to ribosomes in a GTP-dependent manner. The polypeptide is Elongation factor 4 (Sodalis glossinidius (strain morsitans)).